The sequence spans 169 residues: Phosphopantetheine adenylyltransferase (169 aa).

Position 10 (Ser-10) interacts with substrate. ATP-binding positions include 10 to 11 and His-18; that span reads SF. Lys-42, Thr-79, and Arg-93 together coordinate substrate. Residues 94–96, Glu-104, and 129–135 each bind ATP; these read GLR and VRPITAT.

It belongs to the bacterial CoaD family. As to quaternary structure, homohexamer. It depends on Mg(2+) as a cofactor.

It is found in the cytoplasm. The enzyme catalyses (R)-4'-phosphopantetheine + ATP + H(+) = 3'-dephospho-CoA + diphosphate. It participates in cofactor biosynthesis; coenzyme A biosynthesis; CoA from (R)-pantothenate: step 4/5. Its function is as follows. Reversibly transfers an adenylyl group from ATP to 4'-phosphopantetheine, yielding dephospho-CoA (dPCoA) and pyrophosphate. The sequence is that of Phosphopantetheine adenylyltransferase from Rhodopseudomonas palustris (strain TIE-1).